An 80-amino-acid polypeptide reads, in one-letter code: MARKKVALDFEQSLADLQTLVERLENGELSLEDSLTAFEQGIGLTRDCQSALAQAEQKVQVLLERDGELAEEPFDAEQPE.

This sequence belongs to the XseB family. In terms of assembly, heterooligomer composed of large and small subunits.

Its subcellular location is the cytoplasm. It catalyses the reaction Exonucleolytic cleavage in either 5'- to 3'- or 3'- to 5'-direction to yield nucleoside 5'-phosphates.. Its function is as follows. Bidirectionally degrades single-stranded DNA into large acid-insoluble oligonucleotides, which are then degraded further into small acid-soluble oligonucleotides. This Pseudomonas fluorescens (strain SBW25) protein is Exodeoxyribonuclease 7 small subunit.